We begin with the raw amino-acid sequence, 585 residues long: Potassium-transporting ATPase potassium-binding subunit (585 aa).

12 helical membrane passes run 23–43 (GVIIILIYLIIASVLAYILSF), 85–105 (FINLLLFNFFAGLISFLVIMF), 152–172 (FVITGLMFLSAGTGFAASMAF), 194–214 (IFDLILPLTVILTVILILAGI), 275–295 (VEFVSFVIIPLASLISLGIVF), 307–327 (VVMFFFIFDALFAFFGEFAGV), 345–365 (AIGISQSTIFAVGATITSTGA), 367–387 (NAALVSYTPAGIIGVLIGLLL), 397–417 (GVLNIFMYIIFTVFIASLMVG), 444–464 (LLVVIPLGITLMIPHLMSSFV), 502–522 (LDGVLMLLGRYLLMAFQLIIA), and 547–567 (VLLIAAMILIGLLSYFPIIVL).

Belongs to the KdpA family. The system is composed of three essential subunits: KdpA, KdpB and KdpC.

The protein localises to the cell membrane. In terms of biological role, part of the high-affinity ATP-driven potassium transport (or Kdp) system, which catalyzes the hydrolysis of ATP coupled with the electrogenic transport of potassium into the cytoplasm. This subunit binds the extracellular potassium ions and delivers the ions to the membrane domain of KdpB through an intramembrane tunnel. The chain is Potassium-transporting ATPase potassium-binding subunit from Thermoplasma acidophilum (strain ATCC 25905 / DSM 1728 / JCM 9062 / NBRC 15155 / AMRC-C165).